A 621-amino-acid chain; its full sequence is Amino-acid acetyltransferase, mitochondrial (621 aa).

A mitochondrion-targeting transit peptide spans 1-77 (MIPRAPPSTQ…RSYLASFGVQ (77 aa)). A disordered region spans residues 213-233 (PKPGSEEESEPGFSPPETHIY). The N-acetyltransferase domain maps to 424-600 (LPIRVVRSVS…GSAGLSFIED (177 aa)).

The protein belongs to the acetyltransferase family.

The protein resides in the mitochondrion. It catalyses the reaction L-glutamate + acetyl-CoA = N-acetyl-L-glutamate + CoA + H(+). It participates in amino-acid biosynthesis; L-arginine biosynthesis; N(2)-acetyl-L-ornithine from L-glutamate: step 1/4. Functionally, N-acetylglutamate synthase involved in arginine biosynthesis. The polypeptide is Amino-acid acetyltransferase, mitochondrial (ARG2) (Coprinopsis cinerea (strain Okayama-7 / 130 / ATCC MYA-4618 / FGSC 9003) (Inky cap fungus)).